The chain runs to 569 residues: Vacuolar protein sorting-associated protein 53 B (569 aa).

Coiled coils occupy residues 53 to 90 (TRAK…VQDI), 125 to 145 (QVMT…AINE), and 295 to 316 (KEKS…FERE).

This sequence belongs to the VPS53 family. As to quaternary structure, component of the Golgi-associated retrograde protein (GARP) complex.

The protein resides in the cytoplasm. It is found in the golgi apparatus. The protein localises to the trans-Golgi network membrane. It localises to the endosome membrane. Functionally, involved in retrograde transport from early and late endosomes to late Golgi, leading to the membrane fusion between late Golgi and endosomal vesicles. The polypeptide is Vacuolar protein sorting-associated protein 53 B (Arabidopsis thaliana (Mouse-ear cress)).